The following is a 902-amino-acid chain: Phosphoenolpyruvate carboxylase (902 aa).

Histidine 132 is an active-site residue. Positions 327-346 (DALERPEKTAGKKSSKRTPY) are disordered. Lysine 561 is a catalytic residue.

It belongs to the PEPCase type 1 family. The cofactor is Mg(2+).

The enzyme catalyses oxaloacetate + phosphate = phosphoenolpyruvate + hydrogencarbonate. In terms of biological role, forms oxaloacetate, a four-carbon dicarboxylic acid source for the tricarboxylic acid cycle. In Corynebacterium diphtheriae (strain ATCC 700971 / NCTC 13129 / Biotype gravis), this protein is Phosphoenolpyruvate carboxylase.